Consider the following 506-residue polypeptide: Cobyric acid synthase (506 aa).

A GATase cobBQ-type domain is found at 251–448; the sequence is DIDIAVVQVP…LHGLFDSDAF (198 aa). The Nucleophile role is filled by cysteine 332. The active site involves histidine 440.

This sequence belongs to the CobB/CobQ family. CobQ subfamily.

The protein operates within cofactor biosynthesis; adenosylcobalamin biosynthesis. Functionally, catalyzes amidations at positions B, D, E, and G on adenosylcobyrinic A,C-diamide. NH(2) groups are provided by glutamine, and one molecule of ATP is hydrogenolyzed for each amidation. The sequence is that of Cobyric acid synthase from Citrobacter koseri (strain ATCC BAA-895 / CDC 4225-83 / SGSC4696).